The chain runs to 303 residues: Taste receptor type 2 member 13 (303 aa).

At 1-7 the chain is on the extracellular side; that stretch reads MESALPS. Residues 8–28 form a helical membrane-spanning segment; it reads ILTLVIIAEFIIGNLSNGFIV. Over 29 to 55 the chain is Cytoplasmic; sequence LINYIDWVSKRELSSVDKLLIILAISR. A helical transmembrane segment spans residues 56 to 76; sequence IGLIWEILVSWFLALHYLAIF. Topologically, residues 77–85 are extracellular; that stretch reads VSGTGLRIM. The chain crosses the membrane as a helical span at residues 86–106; it reads IFSWIVSNHFSLWLATILSIF. Residues 107 to 128 lie on the Cytoplasmic side of the membrane; that stretch reads YLLKIASFSSPAFLYLKWRVNK. The chain crosses the membrane as a helical span at residues 129–149; sequence VILMILLGSLVFLFLNLIQIN. At 150-184 the chain is on the extracellular side; it reads IHIKDWLDRYEGNTTWNFSMSDFVTFSVSVKFTMT. Residues Asn162 and Asn166 are each glycosylated (N-linked (GlcNAc...) asparagine). The helical transmembrane segment at 185-205 threads the bilayer; it reads MFSLTPFTVALISFSLLIFSL. Over 206–232 the chain is Cytoplasmic; that stretch reads QKHLQKMQLNYKGHREPRTKVHTNALK. A helical transmembrane segment spans residues 233 to 253; that stretch reads IVISFLLLYASFFLCILISWI. Residues 254–261 lie on the Extracellular side of the membrane; it reads SELYQNTA. A helical transmembrane segment spans residues 262 to 282; the sequence is IYMLCETIGLFYPSSHSFLLI. At 283–303 the chain is on the cytoplasmic side; the sequence is LGNPKLRQAFLLVAAKVWAKR.

The protein belongs to the G-protein coupled receptor T2R family.

Its subcellular location is the membrane. Its function is as follows. Receptor that may play a role in the perception of bitterness and is gustducin-linked. May play a role in sensing the chemical composition of the gastrointestinal content. The activity of this receptor may stimulate alpha gustducin, mediate PLC-beta-2 activation and lead to the gating of TRPM5. The polypeptide is Taste receptor type 2 member 13 (TAS2R13) (Pongo pygmaeus (Bornean orangutan)).